A 474-amino-acid polypeptide reads, in one-letter code: Siroheme synthase (474 aa).

Residues 1–203 are precorrin-2 dehydrogenase /sirohydrochlorin ferrochelatase; it reads MDYLPIFLKL…GRAEDAERVL (203 aa). NAD(+) contacts are provided by residues 22-23 and 43-44; these read EV and AS. Positions 219–474 are uroporphyrinogen-III C-methyltransferase; the sequence is GSVALVGAGP…QETEGRSGNG (256 aa). Pro228 serves as a coordination point for S-adenosyl-L-methionine. Residue Asp251 is the Proton acceptor of the active site. The active-site Proton donor is Lys273. Residues 304-306, Ile309, 334-335, Met387, and Gly416 each bind S-adenosyl-L-methionine; these read GGD and TA.

The protein in the N-terminal section; belongs to the precorrin-2 dehydrogenase / sirohydrochlorin ferrochelatase family. This sequence in the C-terminal section; belongs to the precorrin methyltransferase family.

It catalyses the reaction uroporphyrinogen III + 2 S-adenosyl-L-methionine = precorrin-2 + 2 S-adenosyl-L-homocysteine + H(+). The catalysed reaction is precorrin-2 + NAD(+) = sirohydrochlorin + NADH + 2 H(+). The enzyme catalyses siroheme + 2 H(+) = sirohydrochlorin + Fe(2+). It functions in the pathway cofactor biosynthesis; adenosylcobalamin biosynthesis; precorrin-2 from uroporphyrinogen III: step 1/1. Its pathway is cofactor biosynthesis; adenosylcobalamin biosynthesis; sirohydrochlorin from precorrin-2: step 1/1. The protein operates within porphyrin-containing compound metabolism; siroheme biosynthesis; precorrin-2 from uroporphyrinogen III: step 1/1. It participates in porphyrin-containing compound metabolism; siroheme biosynthesis; siroheme from sirohydrochlorin: step 1/1. It functions in the pathway porphyrin-containing compound metabolism; siroheme biosynthesis; sirohydrochlorin from precorrin-2: step 1/1. Multifunctional enzyme that catalyzes the SAM-dependent methylations of uroporphyrinogen III at position C-2 and C-7 to form precorrin-2 via precorrin-1. Then it catalyzes the NAD-dependent ring dehydrogenation of precorrin-2 to yield sirohydrochlorin. Finally, it catalyzes the ferrochelation of sirohydrochlorin to yield siroheme. This is Siroheme synthase from Methylococcus capsulatus (strain ATCC 33009 / NCIMB 11132 / Bath).